Reading from the N-terminus, the 427-residue chain is Glutamate-1-semialdehyde 2,1-aminomutase 1 (427 aa).

At Lys267 the chain carries N6-(pyridoxal phosphate)lysine.

It belongs to the class-III pyridoxal-phosphate-dependent aminotransferase family. HemL subfamily. In terms of assembly, homodimer. Pyridoxal 5'-phosphate serves as cofactor.

Its subcellular location is the cytoplasm. The catalysed reaction is (S)-4-amino-5-oxopentanoate = 5-aminolevulinate. It functions in the pathway porphyrin-containing compound metabolism; protoporphyrin-IX biosynthesis; 5-aminolevulinate from L-glutamyl-tRNA(Glu): step 2/2. The chain is Glutamate-1-semialdehyde 2,1-aminomutase 1 from Staphylococcus epidermidis (strain ATCC 35984 / DSM 28319 / BCRC 17069 / CCUG 31568 / BM 3577 / RP62A).